The primary structure comprises 508 residues: Maturase K (508 aa).

The protein belongs to the intron maturase 2 family. MatK subfamily.

It is found in the plastid. The protein localises to the chloroplast. Its function is as follows. Usually encoded in the trnK tRNA gene intron. Probably assists in splicing its own and other chloroplast group II introns. The chain is Maturase K from Ranunculus lingua (Greater spearwort).